The sequence spans 232 residues: Large ribosomal subunit protein uL1 (232 aa).

The protein belongs to the universal ribosomal protein uL1 family. Part of the 50S ribosomal subunit.

Binds directly to 23S rRNA. The L1 stalk is quite mobile in the ribosome, and is involved in E site tRNA release. Its function is as follows. Protein L1 is also a translational repressor protein, it controls the translation of the L11 operon by binding to its mRNA. This is Large ribosomal subunit protein uL1 from Porphyromonas gingivalis (strain ATCC 33277 / DSM 20709 / CIP 103683 / JCM 12257 / NCTC 11834 / 2561).